We begin with the raw amino-acid sequence, 295 residues long: MDEREALIKAGEIARQVKKEVVDLIKPGAKLYDIAEFVERRIVELGGKPAFPCNLSINEIAAHYTPYKGDGTVLKEGDYLKLDIGVHVDGYIADTAVTFRVGMEEDELMEAAREALENAIATVRAGVMIRDVARAIEETIRGKGFNPIVNLSGHKVERYKLHAGVSVPNVYREADTYVLQEGDVFAIEPFATTGAGQVIEVPPALIFMYLRDRPVRMLQARRLLMHIKKNYKTLPFAYRWLQDFLPEGQLKLALAQLEKAGAIYAYPILREVRGGMVAQFEHTVIVEKEGAYITT.

Histidine 63 is a binding site for substrate. A divalent metal cation-binding residues include aspartate 83, aspartate 94, and histidine 154. A substrate-binding site is contributed by histidine 162. Residues glutamate 188 and glutamate 281 each contribute to the a divalent metal cation site.

The protein belongs to the peptidase M24A family. Methionine aminopeptidase archaeal type 2 subfamily. As to quaternary structure, monomer. The cofactor is Co(2+). Requires Zn(2+) as cofactor. Mn(2+) serves as cofactor. It depends on Fe(2+) as a cofactor.

The enzyme catalyses Release of N-terminal amino acids, preferentially methionine, from peptides and arylamides.. Its function is as follows. Removes the N-terminal methionine from nascent proteins. The N-terminal methionine is often cleaved when the second residue in the primary sequence is small and uncharged (Met-Ala-, Cys, Gly, Pro, Ser, Thr, or Val). This is Methionine aminopeptidase from Thermococcus kodakarensis (strain ATCC BAA-918 / JCM 12380 / KOD1) (Pyrococcus kodakaraensis (strain KOD1)).